The chain runs to 411 residues: Na(+)-translocating NADH-quinone reductase subunit F (411 aa).

The chain crosses the membrane as a helical span at residues 5 to 25 (VILALGIAAFTVIVLVLVAII). The region spanning 36-130 (GDITIDINDD…NMEVELPEEI (95 aa)) is the 2Fe-2S ferredoxin-type domain. [2Fe-2S] cluster-binding residues include C73, C79, C82, and C114. Residues 133–273 (VKKWECTVIS…SGPFGEFFAK (141 aa)) enclose the FAD-binding FR-type domain.

It belongs to the NqrF family. In terms of assembly, composed of six subunits; NqrA, NqrB, NqrC, NqrD, NqrE and NqrF. The cofactor is [2Fe-2S] cluster. Requires FAD as cofactor.

It localises to the cell inner membrane. The enzyme catalyses a ubiquinone + n Na(+)(in) + NADH + H(+) = a ubiquinol + n Na(+)(out) + NAD(+). In terms of biological role, NQR complex catalyzes the reduction of ubiquinone-1 to ubiquinol by two successive reactions, coupled with the transport of Na(+) ions from the cytoplasm to the periplasm. The first step is catalyzed by NqrF, which accepts electrons from NADH and reduces ubiquinone-1 to ubisemiquinone by a one-electron transfer pathway. This is Na(+)-translocating NADH-quinone reductase subunit F from Haemophilus influenzae (strain 86-028NP).